The sequence spans 912 residues: Protein SLFN14 (912 aa).

The required for endoribonuclease activity stretch occupies residues 206–391 (ESTHVEFKRF…KVHKFKEALQ (186 aa)). A required for ribosome binding region spans residues 392–571 (RHLFPVTQEE…QMGCEFFNLL (180 aa)). 593–600 (CFPGVRKT) serves as a coordination point for ATP.

Belongs to the Schlafen family. Subgroup III subfamily. As to quaternary structure, associates with ribosomes in an ATP-independent manner. Mg(2+) serves as cofactor. The cofactor is Mn(2+). Expressed in megakaryocytes and platelets (at protein level). Weakly expressed in melanocytes and malignant melanoma cells.

It localises to the nucleus. Its function is as follows. Shows no ribosome-associated and endoribonuclease activities. Functionally, displays polysome-associated endoribonuclease activity towards mRNAs and rRNAs. May play a role in RNA surveillance pathways by recognizing stalled ribosomes and triggering endonucleolytic cleavage of aberrant mRNAs. Cleaves different types of rRNAs and mRNAs in a magnesium- and manganese-dependent and ATP-independent manner. Involved in correct maturation of megakaryocytes and especially important for proplatelet extension. In Homo sapiens (Human), this protein is Protein SLFN14.